A 181-amino-acid polypeptide reads, in one-letter code: 3-isopropylmalate dehydratase small subunit (181 aa).

It belongs to the LeuD family. LeuD type 2 subfamily. Heterodimer of LeuC and LeuD.

The enzyme catalyses (2R,3S)-3-isopropylmalate = (2S)-2-isopropylmalate. The protein operates within amino-acid biosynthesis; L-leucine biosynthesis; L-leucine from 3-methyl-2-oxobutanoate: step 2/4. Catalyzes the isomerization between 2-isopropylmalate and 3-isopropylmalate, via the formation of 2-isopropylmaleate. This is 3-isopropylmalate dehydratase small subunit from Deinococcus deserti (strain DSM 17065 / CIP 109153 / LMG 22923 / VCD115).